Consider the following 324-residue polypeptide: MTLTKETRVTLNDGNMMPILGLGTYASPHVPKSLAEEAVKIAIDVGYRHIDCAFITGNEMHIGNGIRSKISDGTVKREDIFYTGKLWCTYFSPEMVRKGLERSLRDVGMDYLDLFLMHWPVSLKPSGASDPSDKDKPFIYDNVDLCATWEALEARKDAGLVRSLGVSNFNRRQLERILNKPGLKYKPVCNQVECHVYLNQNKLHSYCKSKDIVLVTYSVLGSHRDRNWVDLSLPVLLDDPILNKVAAKYNRTSAEIAMRFILQKGIVVLAKSFTPARIKQNLGVFEFELKPEDMKSLESLDRNLHYGPFREVKQHPEYPFHDEY.

Thr-2 carries the post-translational modification N-acetylthreonine. Ser-218–Asn-281 contacts NADP(+).

The protein belongs to the aldo/keto reductase family. Monomer.

This is Rho crystallin from Rana temporaria (European common frog).